We begin with the raw amino-acid sequence, 98 residues long: Large ribosomal subunit protein bL28 (98 aa).

The protein belongs to the bacterial ribosomal protein bL28 family.

The chain is Large ribosomal subunit protein bL28 from Mesorhizobium japonicum (strain LMG 29417 / CECT 9101 / MAFF 303099) (Mesorhizobium loti (strain MAFF 303099)).